Reading from the N-terminus, the 245-residue chain is tRNA (guanine-N(1)-)-methyltransferase (245 aa).

S-adenosyl-L-methionine-binding positions include G113 and 133-138 (IGDYVL).

This sequence belongs to the RNA methyltransferase TrmD family. In terms of assembly, homodimer.

It is found in the cytoplasm. It catalyses the reaction guanosine(37) in tRNA + S-adenosyl-L-methionine = N(1)-methylguanosine(37) in tRNA + S-adenosyl-L-homocysteine + H(+). Functionally, specifically methylates guanosine-37 in various tRNAs. This Oceanobacillus iheyensis (strain DSM 14371 / CIP 107618 / JCM 11309 / KCTC 3954 / HTE831) protein is tRNA (guanine-N(1)-)-methyltransferase.